Reading from the N-terminus, the 244-residue chain is 7-cyano-7-deazaguanine synthase (244 aa).

An ATP-binding site is contributed by 14-24 (FSGGQDSATCV). Cysteine 202, cysteine 217, cysteine 220, and cysteine 223 together coordinate Zn(2+).

This sequence belongs to the QueC family. Requires Zn(2+) as cofactor.

The enzyme catalyses 7-carboxy-7-deazaguanine + NH4(+) + ATP = 7-cyano-7-deazaguanine + ADP + phosphate + H2O + H(+). It functions in the pathway purine metabolism; 7-cyano-7-deazaguanine biosynthesis. Functionally, catalyzes the ATP-dependent conversion of 7-carboxy-7-deazaguanine (CDG) to 7-cyano-7-deazaguanine (preQ(0)). The polypeptide is 7-cyano-7-deazaguanine synthase (Burkholderia ambifaria (strain MC40-6)).